The chain runs to 494 residues: Bifunctional protein HldE (494 aa).

The segment at 1 to 334 (MPTPILDFDA…RKILPHAYLA (334 aa)) is ribokinase. Residue 209–212 (NRKE) participates in ATP binding. Aspartate 279 is an active-site residue. Residues 362 to 494 (FTNGCFDILH…LVHRARGGAK (133 aa)) form a cytidylyltransferase region.

This sequence in the N-terminal section; belongs to the carbohydrate kinase PfkB family. In the C-terminal section; belongs to the cytidylyltransferase family. Homodimer.

It carries out the reaction D-glycero-beta-D-manno-heptose 7-phosphate + ATP = D-glycero-beta-D-manno-heptose 1,7-bisphosphate + ADP + H(+). The catalysed reaction is D-glycero-beta-D-manno-heptose 1-phosphate + ATP + H(+) = ADP-D-glycero-beta-D-manno-heptose + diphosphate. It participates in nucleotide-sugar biosynthesis; ADP-L-glycero-beta-D-manno-heptose biosynthesis; ADP-L-glycero-beta-D-manno-heptose from D-glycero-beta-D-manno-heptose 7-phosphate: step 1/4. The protein operates within nucleotide-sugar biosynthesis; ADP-L-glycero-beta-D-manno-heptose biosynthesis; ADP-L-glycero-beta-D-manno-heptose from D-glycero-beta-D-manno-heptose 7-phosphate: step 3/4. Its function is as follows. Catalyzes the phosphorylation of D-glycero-D-manno-heptose 7-phosphate at the C-1 position to selectively form D-glycero-beta-D-manno-heptose-1,7-bisphosphate. In terms of biological role, catalyzes the ADP transfer from ATP to D-glycero-beta-D-manno-heptose 1-phosphate, yielding ADP-D-glycero-beta-D-manno-heptose. The sequence is that of Bifunctional protein HldE from Bradyrhizobium diazoefficiens (strain JCM 10833 / BCRC 13528 / IAM 13628 / NBRC 14792 / USDA 110).